A 49-amino-acid polypeptide reads, in one-letter code: Isoflavone reductase homolog 2 (49 aa).

An NADP(+)-binding site is contributed by 5-11 (GGTGYIG).

This sequence belongs to the NmrA-type oxidoreductase family. Isoflavone reductase subfamily.

It localises to the cytoplasm. This is Isoflavone reductase homolog 2 from Pseudotsuga menziesii (Douglas-fir).